Here is a 278-residue protein sequence, read N- to C-terminus: Manganese import system permease protein ScaB (278 aa).

8 helical membrane-spanning segments follow: residues 18–38 (ALIT…FIIL), 61–81 (ILGI…SIII), 94–114 (TAIG…ISVA), 134–154 (LDMW…SIFF), 174–194 (VNFY…TAMQ), 196–216 (VGTI…YLYA), 222–242 (MILL…FIGY), and 246–266 (VAAG…SFFI).

This sequence belongs to the ABC-3 integral membrane protein family. As to quaternary structure, the complex is composed of two ATP-binding proteins (ScaC), two transmembrane proteins (ScaB) and a solute-binding protein (ScaA).

It localises to the cell membrane. Functionally, part of the high-affinity ABC transporter complex ScaABC involved in manganese import. Probably responsible for the translocation of the substrate across the membrane. Essential for growth under Mn(2+)-limiting conditions. The sequence is that of Manganese import system permease protein ScaB from Streptococcus gordonii.